Reading from the N-terminus, the 147-residue chain is Large ribosomal subunit protein uL15 (147 aa).

Residues 1–13 are compositionally biased toward basic and acidic residues; the sequence is MELHSLKAAEGSR. The segment at 1-57 is disordered; it reads MELHSLKAAEGSRKVRNRVGRGTSSGNGKTSGRGQKGQKSRSGGGVRPGFEGGQTEL. 2 stretches are compositionally biased toward gly residues: residues 23–35 and 42–52; these read TSSGNGKTSGRGQ and SGGGVRPGFEG.

Belongs to the universal ribosomal protein uL15 family. As to quaternary structure, part of the 50S ribosomal subunit.

Functionally, binds to the 23S rRNA. The sequence is that of Large ribosomal subunit protein uL15 from Lactococcus lactis subsp. lactis (strain IL1403) (Streptococcus lactis).